The following is a 382-amino-acid chain: Prostaglandin D2 receptor 2 (382 aa).

Residues 1 to 32 (MANVTLKPLCPLLEEMVQLPNHSNSSLRYIDH) lie on the Extracellular side of the membrane. N-linked (GlcNAc...) asparagine glycosylation is found at N3, N21, and N24. The helical transmembrane segment at 33–55 (VSVLLHGLASLLGLVENGLILFV) threads the bilayer. At 56-66 (VGCRMRQTVVT) the chain is on the cytoplasmic side. The chain crosses the membrane as a helical span at residues 67–88 (TWVLHLALSDLLAAASLPFFTY). Over 89–105 (FLAVGHSWELGTTFCKL) the chain is Extracellular. A disulfide bridge connects residues C103 and C181. The helical transmembrane segment at 106–126 (HSSVFFLNMFASGFLLSAISL) threads the bilayer. Topologically, residues 127 to 145 (DRCLQVVRPVWAQNHRTVA) are cytoplasmic. Residues 146 to 167 (VAHRVCLMLWALAVLNTIPYFV) form a helical membrane-spanning segment. Over 168–209 (FRDTIPRLDGRIMCYYNLLLWNPGPDRDTTCDYRQKALAVSK) the chain is Extracellular. A helical transmembrane segment spans residues 210-230 (FLLAFMVPLAIIASSHVAVSL). Topologically, residues 231–246 (RLHHRGRQRTGRFVRL) are cytoplasmic. The helical transmembrane segment at 247 to 268 (VAAIVVAFVLCWGPYHIFSLLE) threads the bilayer. Residues 269–287 (ARAHSVTTLRQLASRGLPF) lie on the Extracellular side of the membrane. The chain crosses the membrane as a helical span at residues 288-307 (VTSLAFFNSVVNPLLYVFTC). Residues 308 to 357 (PDMLYKLRRSLRAVLESVLVEDSDQSGGLRNRRRRASSTATPASTLLLAD) are Cytoplasmic-facing. The Involved in the recycling of CRTH2 signature appears at 329–332 (DSDQ). 2 positions are modified to phosphoserine: S330 and S344.

Belongs to the G-protein coupled receptor 1 family. In terms of processing, phosphorylated.

The protein localises to the cell membrane. Receptor for prostaglandin D2 (PGD2). Coupled to the G(i)-protein. Receptor activation may result in pertussis toxin-sensitive decreases in cAMP levels and Ca(2+) mobilization. PI3K signaling is also implicated in mediating PTGDR2 effects. PGD2 induced receptor internalization. CRTH2 internalization can be regulated by diverse kinases such as, PKC, PKA, GRK2, GPRK5/GRK5 and GRK6. Receptor activation is responsible, at least in part, in immune regulation and allergic/inflammation responses. The sequence is that of Prostaglandin D2 receptor 2 (Ptgdr2) from Mus musculus (Mouse).